The sequence spans 161 residues: Gamma-glutamylaminecyclotransferase A (161 aa).

26–29 lines the substrate pocket; the sequence is YGTL. Glu101 (proton acceptor) is an active-site residue.

The protein belongs to the gamma-glutamylcyclotransferase family.

It carries out the reaction epsilon-(gamma-L-glutamyl)-L-lysine = 5-oxo-L-proline + L-lysine. In terms of biological role, may contribute to degradation of proteins cross-linked by transglutaminases by degrading the cross-link between a lysine and a glutamic acid residue. Catalyzes the formation of 5-oxo-L-proline from L-gamma-glutamyl-L-epsilon-lysine. This Danio rerio (Zebrafish) protein is Gamma-glutamylaminecyclotransferase A (ggact.1).